Reading from the N-terminus, the 319-residue chain is Ribonuclease Z (319 aa).

Residues His62, His64, Asp66, His67, His145, Asp215, and His273 each coordinate Zn(2+). The active-site Proton acceptor is the Asp66.

This sequence belongs to the RNase Z family. As to quaternary structure, homodimer. Requires Zn(2+) as cofactor.

It catalyses the reaction Endonucleolytic cleavage of RNA, removing extra 3' nucleotides from tRNA precursor, generating 3' termini of tRNAs. A 3'-hydroxy group is left at the tRNA terminus and a 5'-phosphoryl group is left at the trailer molecule.. Functionally, zinc phosphodiesterase, which displays some tRNA 3'-processing endonuclease activity. Probably involved in tRNA maturation, by removing a 3'-trailer from precursor tRNA. The chain is Ribonuclease Z from Borreliella burgdorferi (strain ATCC 35210 / DSM 4680 / CIP 102532 / B31) (Borrelia burgdorferi).